The sequence spans 328 residues: Probable voltage-gated potassium channel subunit beta (328 aa).

Residues W21, Q27, and D49 each contribute to the NADP(+) site. Catalysis depends on Y54, which acts as the Proton donor/acceptor. Positions 152, 178, 207, 208, 209, 210, 211, 218, 229, 285, 287, 291, 294, and 295 each coordinate NADP(+).

This sequence belongs to the shaker potassium channel beta subunit family. In terms of assembly, forms heteromultimeric complexes with potassium channel alpha subunits. As to expression, expressed in late-developed leaves with the highest expression in the flag leaf (at protein level).

In terms of biological role, probable accessory potassium channel protein which modulates the activity of the pore-forming alpha subunit. This is Probable voltage-gated potassium channel subunit beta (KOB1) from Oryza sativa subsp. japonica (Rice).